Consider the following 648-residue polypeptide: Leucine aminopeptidase 2 (648 aa).

A peptide-binding positions include 143–145 (QCQ) and 269–274 (PYGGME). Histidine 298 is a Zn(2+) binding site. Catalysis depends on glutamate 299, which acts as the Proton acceptor. Zn(2+) is bound by residues histidine 302 and glutamate 321. Residue tyrosine 408 is the Proton donor of the active site.

This sequence belongs to the peptidase M1 family. Zn(2+) is required as a cofactor.

The protein localises to the cytoplasm. Its subcellular location is the nucleus. The catalysed reaction is an epoxide + H2O = an ethanediol. Aminopeptidase that preferentially cleaves di- and tripeptides. Also has low epoxide hydrolase activity (in vitro). Can hydrolyze the epoxide leukotriene LTA(4) but it forms preferentially 5,6-dihydroxy-7,9,11,14-eicosatetraenoic acid rather than the cytokine leukotriene B(4) as the product compared to the homologous mammalian enzyme (in vitro). This is Leucine aminopeptidase 2 from Lodderomyces elongisporus (strain ATCC 11503 / CBS 2605 / JCM 1781 / NBRC 1676 / NRRL YB-4239) (Yeast).